Reading from the N-terminus, the 262-residue chain is tRNA pseudouridine synthase A (262 aa).

Aspartate 51 (nucleophile) is an active-site residue. Tyrosine 109 is a substrate binding site.

This sequence belongs to the tRNA pseudouridine synthase TruA family. As to quaternary structure, homodimer.

It catalyses the reaction uridine(38/39/40) in tRNA = pseudouridine(38/39/40) in tRNA. In terms of biological role, formation of pseudouridine at positions 38, 39 and 40 in the anticodon stem and loop of transfer RNAs. The sequence is that of tRNA pseudouridine synthase A from Aliivibrio salmonicida (strain LFI1238) (Vibrio salmonicida (strain LFI1238)).